A 345-amino-acid chain; its full sequence is Protein RecA (345 aa).

An ATP-binding site is contributed by 63-70; the sequence is GPESSGKT. A disordered region spans residues 326–345; it reads VLSDALMTDPEPDADGTPED. Positions 335-345 are enriched in acidic residues; that stretch reads PEPDADGTPED.

The protein belongs to the RecA family.

The protein localises to the cytoplasm. Functionally, can catalyze the hydrolysis of ATP in the presence of single-stranded DNA, the ATP-dependent uptake of single-stranded DNA by duplex DNA, and the ATP-dependent hybridization of homologous single-stranded DNAs. It interacts with LexA causing its activation and leading to its autocatalytic cleavage. In Gluconobacter oxydans (strain 621H) (Gluconobacter suboxydans), this protein is Protein RecA.